We begin with the raw amino-acid sequence, 299 residues long: 11-beta-hydroxysteroid dehydrogenase-like 4A (299 aa).

A helical; Signal-anchor for type II membrane protein membrane pass occupies residues 10-30; that stretch reads ILLPIVTVSFLLVFMPFSIFF. NADP(+) contacts are provided by residues 54 to 80 and Asp-105; that span reads GSSSGIGEHLAYEYARRGAYLTLVARR. Ser-184 contacts substrate. Residue Tyr-197 is the Proton acceptor of the active site. NADP(+) is bound by residues 197–201 and Lys-201; that span reads YAASK.

This sequence belongs to the short-chain dehydrogenases/reductases (SDR) family.

It localises to the membrane. The protein is 11-beta-hydroxysteroid dehydrogenase-like 4A (HSD4) of Arabidopsis thaliana (Mouse-ear cress).